The primary structure comprises 361 residues: tRNA-specific 2-thiouridylase MnmA (361 aa).

ATP is bound by residues 10 to 17 (GMSGGVDS) and Met-36. The Nucleophile role is filled by Cys-104. Cysteines 104 and 202 form a disulfide. ATP is bound at residue Gly-128. Residues 152–154 (KDQ) are interaction with tRNA. The active-site Cysteine persulfide intermediate is the Cys-202. The tract at residues 308–309 (RY) is interaction with tRNA.

Belongs to the MnmA/TRMU family.

The protein localises to the cytoplasm. It catalyses the reaction S-sulfanyl-L-cysteinyl-[protein] + uridine(34) in tRNA + AH2 + ATP = 2-thiouridine(34) in tRNA + L-cysteinyl-[protein] + A + AMP + diphosphate + H(+). Its function is as follows. Catalyzes the 2-thiolation of uridine at the wobble position (U34) of tRNA, leading to the formation of s(2)U34. The polypeptide is tRNA-specific 2-thiouridylase MnmA (Clostridioides difficile (strain 630) (Peptoclostridium difficile)).